An 842-amino-acid chain; its full sequence is Glycogen phosphorylase, muscle form (842 aa).

N-acetylserine is present on Ser2. Residue Ser15 is modified to Phosphoserine; by PHK; in form phosphorylase A. AMP is bound by residues Asp43 and Tyr76. A phosphotyrosine mark is found at Tyr204 and Tyr227. AMP is bound at residue 310–319 (RRFKSSKFGC). At Ser430 the chain carries Phosphoserine. The residue at position 473 (Tyr473) is a Phosphotyrosine. Position 514 is a phosphoserine (Ser514). Lys681 carries the N6-(pyridoxal phosphate)lysine modification. 2 positions are modified to phosphoserine: Ser747 and Ser748.

It belongs to the glycogen phosphorylase family. As to quaternary structure, homodimer. Homotetramer; to form the enzymatically active phosphorylase A. The cofactor is pyridoxal 5'-phosphate. In terms of processing, phosphorylation of Ser-15 converts phosphorylase B (unphosphorylated) to phosphorylase A.

The enzyme catalyses [(1-&gt;4)-alpha-D-glucosyl](n) + phosphate = [(1-&gt;4)-alpha-D-glucosyl](n-1) + alpha-D-glucose 1-phosphate. With respect to regulation, allosterically regulated through the non-covalent binding of metabolites, being activated by AMP and inhibited by ATP, ADP, and glucose-6-phosphate. The activity is also controlled by post-translational modifications including phosphorylation. Functionally, allosteric enzyme that catalyzes the rate-limiting step in glycogen catabolism, the phosphorolytic cleavage of glycogen to produce glucose-1-phosphate, and plays a central role in maintaining cellular and organismal glucose homeostasis. This Macaca fascicularis (Crab-eating macaque) protein is Glycogen phosphorylase, muscle form.